Here is a 205-residue protein sequence, read N- to C-terminus: Macrophage immunometabolism regulator (205 aa).

The disordered stretch occupies residues 1–40 (MEVDINGVNRTNNSVPSTTEGSSPSKPDPEKPRCSSTPCS). A compositionally biased stretch (polar residues) spans 8–25 (VNRTNNSVPSTTEGSSPS).

Belongs to the UNC119-binding protein family. In terms of assembly, interacts with unc119 family proteins; interaction preferentially takes place when unc119 proteins are unliganded with myristoylated proteins.

It is found in the cytoplasm. It localises to the cell projection. Its subcellular location is the cilium. Its function is as follows. May play a role in immune regulation through regulation of the macrophage function. May also play a role in trafficking of proteins via its interaction with unc119 family cargo adapters. May play a role in ciliary membrane localization. This is Macrophage immunometabolism regulator (macir) from Xenopus tropicalis (Western clawed frog).